The primary structure comprises 855 residues: Suppressor of tumorigenicity 14 protein (855 aa).

Residues 1 to 20 (MGSDRARKGGGGPKDFGAGL) are disordered. The Cytoplasmic portion of the chain corresponds to 1 to 55 (MGSDRARKGGGGPKDFGAGLKYNSRHEKVNGLEEGVEFLPVNNVKKVEKHGPGRW). A helical; Signal-anchor for type II membrane protein membrane pass occupies residues 56 to 76 (VVLAAVLIGLLLVLLGIGFLV). Topologically, residues 77-855 (WHLQYRDVRV…RDWIKENTGV (779 aa)) are extracellular. Residues 86 to 203 (VQKVFNGYMR…TSVVAFPTDS (118 aa)) enclose the SEA domain. An N-linked (GlcNAc...) asparagine glycan is attached at asparagine 109. Cysteine 214 and cysteine 244 are oxidised to a cystine. 2 consecutive CUB domains span residues 214-334 (CSFG…FFQL) and 340-447 (CGGR…YLSY). A glycan (N-linked (GlcNAc...) asparagine) is linked at asparagine 302. Disulfide bonds link cysteine 340–cysteine 366, cysteine 397–cysteine 410, cysteine 453–cysteine 464, cysteine 459–cysteine 477, cysteine 471–cysteine 486, cysteine 488–cysteine 501, cysteine 496–cysteine 514, cysteine 508–cysteine 523, cysteine 525–cysteine 537, cysteine 532–cysteine 550, cysteine 544–cysteine 559, cysteine 567–cysteine 579, cysteine 574–cysteine 593, cysteine 587–cysteine 602, and cysteine 641–cysteine 657. LDL-receptor class A domains are found at residues 452 to 487 (PCPG…LNCS), 487 to 524 (SCDA…QGCS), 524 to 560 (SCPA…ASCP), and 566 to 603 (TCTK…KDCD). Asparagine 485 is a glycosylation site (N-linked (GlcNAc...) asparagine). A Peptidase S1 domain is found at 615–854 (VVGGTDADEG…FRDWIKENTG (240 aa)). Residues histidine 656 and aspartate 711 each act as charge relay system in the active site. Asparagine 772 carries an N-linked (GlcNAc...) asparagine glycan. Intrachain disulfides connect cysteine 776–cysteine 790 and cysteine 801–cysteine 830. Catalysis depends on serine 805, which acts as the Charge relay system.

The protein belongs to the peptidase S1 family. In terms of assembly, interacts with CDCP1. May interact with TMEFF1. Interacts with iripin-3, a serine protease inhibitor from Ixodes ricinus saliva. Interacts with iripin-1, a serine protease inhibitor from Ixodes ricinus saliva.

The protein resides in the membrane. The enzyme catalyses Cleaves various synthetic substrates with Arg or Lys at the P1 position and prefers small side-chain amino acids, such as Ala and Gly, at the P2 position.. Its function is as follows. Exhibits trypsin-like activity as defined by cleavage of synthetic substrates with Arg or Lys as the P1 site. Involved in the terminal differentiation of keratinocytes through prostasin (PRSS8) activation and filaggrin (FLG) processing. Proteolytically cleaves and therefore activates TMPRSS13. The polypeptide is Suppressor of tumorigenicity 14 protein (ST14) (Homo sapiens (Human)).